We begin with the raw amino-acid sequence, 413 residues long: Cardiolipin synthase B (413 aa).

PLD phosphodiesterase domains are found at residues 108–135 (IFRR…SAEH) and 285–312 (RRRP…DPLS). Active-site residues include histidine 113, lysine 115, aspartate 120, histidine 290, lysine 292, and aspartate 297. Positions 388-413 (AQVPPPAQPEMETQDRVDPENTGVKP) are disordered.

The protein belongs to the phospholipase D family. Cardiolipin synthase subfamily. ClsB sub-subfamily.

Its subcellular location is the cell membrane. It catalyses the reaction 2 a 1,2-diacyl-sn-glycero-3-phospho-(1'-sn-glycerol) = a cardiolipin + glycerol. Catalyzes the phosphatidyl group transfer from one phosphatidylglycerol molecule to another to form cardiolipin (CL) (diphosphatidylglycerol) and glycerol. This Salmonella typhimurium (strain LT2 / SGSC1412 / ATCC 700720) protein is Cardiolipin synthase B.